Consider the following 237-residue polypeptide: Flagellar L-ring protein (237 aa).

The N-terminal stretch at 1-24 is a signal peptide; it reads MNRPGFPRFSVLIASLCGITLLSG. Cysteine 25 carries the N-palmitoyl cysteine lipid modification. A lipid anchor (S-diacylglycerol cysteine) is attached at cysteine 25.

Belongs to the FlgH family. In terms of assembly, the basal body constitutes a major portion of the flagellar organelle and consists of four rings (L,P,S, and M) mounted on a central rod.

It localises to the cell outer membrane. The protein resides in the bacterial flagellum basal body. Functionally, assembles around the rod to form the L-ring and probably protects the motor/basal body from shearing forces during rotation. The protein is Flagellar L-ring protein of Pseudomonas syringae pv. tomato (strain ATCC BAA-871 / DC3000).